A 123-amino-acid chain; its full sequence is Small ribosomal subunit protein uS12 (123 aa).

Asp89 carries the 3-methylthioaspartic acid modification.

Belongs to the universal ribosomal protein uS12 family. In terms of assembly, part of the 30S ribosomal subunit. Contacts proteins S8 and S17. May interact with IF1 in the 30S initiation complex.

In terms of biological role, with S4 and S5 plays an important role in translational accuracy. Interacts with and stabilizes bases of the 16S rRNA that are involved in tRNA selection in the A site and with the mRNA backbone. Located at the interface of the 30S and 50S subunits, it traverses the body of the 30S subunit contacting proteins on the other side and probably holding the rRNA structure together. The combined cluster of proteins S8, S12 and S17 appears to hold together the shoulder and platform of the 30S subunit. This is Small ribosomal subunit protein uS12 from Rhizobium meliloti (strain 1021) (Ensifer meliloti).